The primary structure comprises 93 residues: Small ribosomal subunit protein bS20 (93 aa).

Over residues 1–18 (MPLHKSAEKRLRQSEKRN) the composition is skewed to basic and acidic residues. The tract at residues 1–25 (MPLHKSAEKRLRQSEKRNARNRARK) is disordered.

This sequence belongs to the bacterial ribosomal protein bS20 family.

In terms of biological role, binds directly to 16S ribosomal RNA. This Chlorobium chlorochromatii (strain CaD3) protein is Small ribosomal subunit protein bS20.